Consider the following 443-residue polypeptide: Histidine--tRNA ligase (443 aa).

The span at Met1–Lys20 shows a compositional bias: basic and acidic residues. The disordered stretch occupies residues Met1–Ala21.

Belongs to the class-II aminoacyl-tRNA synthetase family. In terms of assembly, homodimer.

Its subcellular location is the cytoplasm. It carries out the reaction tRNA(His) + L-histidine + ATP = L-histidyl-tRNA(His) + AMP + diphosphate + H(+). This chain is Histidine--tRNA ligase, found in Corynebacterium jeikeium (strain K411).